We begin with the raw amino-acid sequence, 182 residues long: Ribulose bisphosphate carboxylase small subunit, chloroplastic 1 (182 aa).

The transit peptide at 1-42 (MASIMMNKSVVLSKECAKPLATPKVTLNKRGFATTIATKNRE) directs the protein to the chloroplast.

The protein belongs to the RuBisCO small chain family. Heterohexadecamer of 8 large and 8 small subunits.

Its subcellular location is the plastid. It localises to the chloroplast. RuBisCO catalyzes two reactions: the carboxylation of D-ribulose 1,5-bisphosphate, the primary event in carbon dioxide fixation, as well as the oxidative fragmentation of the pentose substrate. Both reactions occur simultaneously and in competition at the same active site. Although the small subunit is not catalytic it is essential for maximal activity. The chain is Ribulose bisphosphate carboxylase small subunit, chloroplastic 1 from Acetabularia acetabulum (Mermaid's wine glass).